We begin with the raw amino-acid sequence, 132 residues long: Protamine (132 aa).

Disordered stretches follow at residues 17–46 (GGKKRRRRRSKRRRSRCGRSRRRKSCRGGR) and 96–115 (SMLKKRGRRRRRRSCRRRRR). 2 stretches are compositionally biased toward basic residues: residues 18 to 46 (GKKRRRRRSKRRRSRCGRSRRRKSCRGGR) and 98 to 115 (LKKRGRRRRRRSCRRRRR).

It belongs to the UPF0771 family. As to expression, testis.

The protein resides in the nucleus. Its subcellular location is the chromosome. Its function is as follows. Protamines substitute for histones in the chromatin of sperm during the haploid phase of spermatogenesis. They compact sperm DNA into a highly condensed, stable and inactive complex. This Anthonomus grandis (Mexican cotton boll weevil) protein is Protamine.